The chain runs to 1843 residues: Proteasome activator complex subunit 4 (1843 aa).

Low complexity predominate over residues 1-11; it reads MEPAERAGVGE. Residues 1-25 are disordered; the sequence is MEPAERAGVGEPPEPGGRPEPGPRG. Pro residues predominate over residues 12-22; it reads PPEPGGRPEPG. HEAT repeat units follow at residues 475–519 and 998–1037; these read PEGP…LVDC and NFCC…NHSG. Ser1121 is modified (phosphoserine). HEAT repeat units lie at residues 1179-1217 and 1354-1392; these read RVLP…QLKR and DAFL…GSKH. Ser1614 carries the post-translational modification Phosphoserine. HEAT repeat units follow at residues 1636–1674 and 1680–1718; these read PHQV…YNLF and EDAV…CNFL. The bromodomain-like (BRDL) stretch occupies residues 1650 to 1738; it reads ARSSSWHARY…EQLCKTKLPK (89 aa). Ser1746 carries the phosphoserine modification.

It belongs to the BLM10 family. In terms of assembly, homodimer. Interacts with the 20S and 26S proteasomes. Component of the spermatoproteasome, a form of the proteasome specifically found in testis.

The protein localises to the cytoplasm. It localises to the cytosol. It is found in the nucleus. The protein resides in the nucleus speckle. Associated component of the proteasome that specifically recognizes acetylated histones and promotes ATP- and ubiquitin-independent degradation of core histones during spermatogenesis and DNA damage response. Recognizes and binds acetylated histones via its bromodomain-like (BRDL) region and activates the proteasome by opening the gated channel for substrate entry. Binds to the core proteasome via its C-terminus, which occupies the same binding sites as the proteasomal ATPases, opening the closed structure of the proteasome via an active gating mechanism. Component of the spermatoproteasome, a form of the proteasome specifically found in testis: binds to acetylated histones and promotes degradation of histones, thereby participating actively to the exchange of histones during spermatogenesis. Also involved in DNA damage response in somatic cells, by promoting degradation of histones following DNA double-strand breaks. This chain is Proteasome activator complex subunit 4, found in Homo sapiens (Human).